We begin with the raw amino-acid sequence, 131 residues long: Large ribosomal subunit protein uL22 (131 aa).

Residues 1 to 11 are compositionally biased toward basic residues; the sequence is MAKGHRSKIKR. A disordered region spans residues 1 to 20; sequence MAKGHRSKIKRERNEVRDTR.

It belongs to the universal ribosomal protein uL22 family. Part of the 50S ribosomal subunit.

Its function is as follows. This protein binds specifically to 23S rRNA; its binding is stimulated by other ribosomal proteins, e.g. L4, L17, and L20. It is important during the early stages of 50S assembly. It makes multiple contacts with different domains of the 23S rRNA in the assembled 50S subunit and ribosome. The globular domain of the protein is located near the polypeptide exit tunnel on the outside of the subunit, while an extended beta-hairpin is found that lines the wall of the exit tunnel in the center of the 70S ribosome. This chain is Large ribosomal subunit protein uL22, found in Agathobacter rectalis (strain ATCC 33656 / DSM 3377 / JCM 17463 / KCTC 5835 / VPI 0990) (Eubacterium rectale).